Here is a 364-residue protein sequence, read N- to C-terminus: 3-isopropylmalate dehydrogenase (364 aa).

Residue 79–92 (GPKWNNINETSRPE) participates in NAD(+) binding. The substrate site is built by R100, R110, R139, and D228. Mg(2+) contacts are provided by D228, D252, and D256. Residue 286–298 (GSAPDIAGKNIAN) participates in NAD(+) binding.

This sequence belongs to the isocitrate and isopropylmalate dehydrogenases family. LeuB type 1 subfamily. Homodimer. It depends on Mg(2+) as a cofactor. The cofactor is Mn(2+).

It is found in the cytoplasm. The enzyme catalyses (2R,3S)-3-isopropylmalate + NAD(+) = 4-methyl-2-oxopentanoate + CO2 + NADH. The protein operates within amino-acid biosynthesis; L-leucine biosynthesis; L-leucine from 3-methyl-2-oxobutanoate: step 3/4. In terms of biological role, catalyzes the oxidation of 3-carboxy-2-hydroxy-4-methylpentanoate (3-isopropylmalate) to 3-carboxy-4-methyl-2-oxopentanoate. The product decarboxylates to 4-methyl-2 oxopentanoate. This is 3-isopropylmalate dehydrogenase from Blochmanniella floridana.